We begin with the raw amino-acid sequence, 185 residues long: Large ribosomal subunit protein uL5 (185 aa).

Belongs to the universal ribosomal protein uL5 family. As to quaternary structure, part of the 50S ribosomal subunit; contacts the 5S rRNA and probably tRNA. Forms a bridge to the 30S subunit in the 70S ribosome.

Functionally, this is one of the proteins that bind and probably mediate the attachment of the 5S RNA into the large ribosomal subunit, where it forms part of the central protuberance. In the 70S ribosome it contacts protein S13 of the 30S subunit (bridge B1b), connecting the 2 subunits; this bridge is implicated in subunit movement. May contact the P site tRNA; the 5S rRNA and some of its associated proteins might help stabilize positioning of ribosome-bound tRNAs. This Haloquadratum walsbyi (strain DSM 16790 / HBSQ001) protein is Large ribosomal subunit protein uL5.